The following is a 371-amino-acid chain: Ubiquitin receptor RAD23b (371 aa).

The Ubiquitin-like domain occupies 1 to 79 (MKLTVKTLKG…LVVMLSKSKS (79 aa)). Over residues 79-117 (SGGSAGQASVQTSSVSQPVSATTSSTKPAAPSTTQSSPV) the composition is skewed to low complexity. A disordered region spans residues 79–142 (SGGSAGQASV…DTYGQAASTL (64 aa)). The segment covering 128–142 (PAAQTDTYGQAASTL) has biased composition (polar residues). Residues 146-189 (SSLEQMVQQIMEMGGGSWDKETVTRALRAAYNNPERAVDYLYSG) form the UBA 1 domain. The STI1 domain maps to 242-285 (GTLEFLRNNDQFQQLRTMVHSNPQILQPMLQELGKQNPQLLRLI). Residues 325 to 365 (PAEQEAIQRLEAMGFDRALVIEAFLACDRNEELAANYLLEN) enclose the UBA 2 domain.

This sequence belongs to the RAD23 family. In terms of assembly, interacts with 'Lys-48'-linked polyubiquitin chains. Interacts with RPN10 via its ubiquitin-like domain. Interacts with UBQ1, UBQ2, UBQ5, UBQ7, UBQ10, UBQ11 and IAA16. Binds to RAD4. Widely expressed in the whole plant.

It is found in the nucleus. The protein localises to the cytoplasm. In terms of biological role, may be involved in nucleotide excision repair. Binds and presumably selects ubiquitin-conjugates for destruction. Prefers multiubiquitin chains rather than single ubiquitins, with a binding affinity for 'Lys-48'-linked ubiquitin chains. Acts as a ubiquitin receptor that associates with the 26S proteasomal docking subunit RPN10 for the indirect recognition of ubiquitinated substrates of ubiquitin/26S proteasome-mediated proteolysis (UPP). Involved in UV tolerance in both roots and hypocotyls, specifically in dark conditions. This Arabidopsis thaliana (Mouse-ear cress) protein is Ubiquitin receptor RAD23b.